The sequence spans 242 residues: Outer membrane protein class 4 (242 aa).

The first 22 residues, 1–22, serve as a signal peptide directing secretion; the sequence is MTKQLKLSALFVALLASGTAVA. Repeat copies occupy residues 69 to 70, 71 to 72, 73 to 74, 75 to 76, 77 to 78, 79 to 80, and 81 to 82. Residues 69–82 form a 7 X 2 AA tandem repeats of X-P region; sequence APEPEPEPEPAPAP. One can recognise an OmpA-like domain in the interval 92–229; the sequence is YVDETISLSA…RVDVKIRSIV (138 aa). A disulfide bridge links C191 with C214.

It belongs to the outer membrane OOP (TC 1.B.6) superfamily.

It is found in the cell outer membrane. This is Outer membrane protein class 4 (rmpM) from Neisseria meningitidis serogroup A / serotype 4A (strain DSM 15465 / Z2491).